We begin with the raw amino-acid sequence, 416 residues long: UDP-N-acetylmuramoylalanine--D-glutamate ligase (416 aa).

108-114 (GTTGKTT) provides a ligand contact to ATP.

The protein belongs to the MurCDEF family.

It localises to the cytoplasm. The catalysed reaction is UDP-N-acetyl-alpha-D-muramoyl-L-alanine + D-glutamate + ATP = UDP-N-acetyl-alpha-D-muramoyl-L-alanyl-D-glutamate + ADP + phosphate + H(+). It participates in cell wall biogenesis; peptidoglycan biosynthesis. Its function is as follows. Cell wall formation. Catalyzes the addition of glutamate to the nucleotide precursor UDP-N-acetylmuramoyl-L-alanine (UMA). The chain is UDP-N-acetylmuramoylalanine--D-glutamate ligase from Chlamydia trachomatis serovar L2 (strain ATCC VR-902B / DSM 19102 / 434/Bu).